The sequence spans 634 residues: Threonine--tRNA ligase (634 aa).

The segment at 1–142 is editing domain; the sequence is MQLLLIHSDY…LSRSIRPEGA (142 aa). Residues 214 to 513 form a catalytic region; it reads PHVELMRRLE…TEEGKVPMLP (300 aa). Residues Cys-306, His-358, and His-482 each coordinate Zn(2+).

The protein belongs to the class-II aminoacyl-tRNA synthetase family. As to quaternary structure, homodimer. Zn(2+) serves as cofactor.

Its subcellular location is the cytoplasm. The enzyme catalyses tRNA(Thr) + L-threonine + ATP = L-threonyl-tRNA(Thr) + AMP + diphosphate + H(+). Its function is as follows. Catalyzes the attachment of threonine to tRNA(Thr) in a two-step reaction: L-threonine is first activated by ATP to form Thr-AMP and then transferred to the acceptor end of tRNA(Thr). Edits incorrectly charged L-seryl-tRNA(Thr) probably via its editing domain (tested with total bovine tRNA). Activates L-serine, but does not detectably transfer it to tRNA (tested with total bovine tRNA). This is Threonine--tRNA ligase from Methanosarcina mazei (strain ATCC BAA-159 / DSM 3647 / Goe1 / Go1 / JCM 11833 / OCM 88) (Methanosarcina frisia).